We begin with the raw amino-acid sequence, 341 residues long: tRNA N6-adenosine threonylcarbamoyltransferase (341 aa).

Residues H117 and H121 each coordinate Fe cation. Substrate is bound by residues 140–144, D173, G186, and N278; that span reads VVSGG. D306 provides a ligand contact to Fe cation.

It belongs to the KAE1 / TsaD family. Fe(2+) is required as a cofactor.

The protein resides in the cytoplasm. The catalysed reaction is L-threonylcarbamoyladenylate + adenosine(37) in tRNA = N(6)-L-threonylcarbamoyladenosine(37) in tRNA + AMP + H(+). Required for the formation of a threonylcarbamoyl group on adenosine at position 37 (t(6)A37) in tRNAs that read codons beginning with adenine. Is involved in the transfer of the threonylcarbamoyl moiety of threonylcarbamoyl-AMP (TC-AMP) to the N6 group of A37, together with TsaE and TsaB. TsaD likely plays a direct catalytic role in this reaction. This Symbiobacterium thermophilum (strain DSM 24528 / JCM 14929 / IAM 14863 / T) protein is tRNA N6-adenosine threonylcarbamoyltransferase.